The following is a 537-amino-acid chain: MTSSKSHPEAADIQRVRRALLSVSDKTGLIDFARALHGAGVELISTGGTAKAIKDAALPVKDVADLTGFPEMMDGRVKTLHPKVHGGLLAVRDDAEHAAAMKEHGIAGIDLLCVNLYPFEATVAKGAAYDECVENIDIGGPAMIRAAAKNHAYVGVIVDGADYAAVIEEITGKGGTSLVLRKRLAQKAYARTAAYDAAISNWFANAIGETAPDYRAFGGSLKQTLRYGENPHQVASFYVTGENRPGVSNAEQLQGKELSYNNINDTDAAFELVGEFDPKLAPAIAIIKHANPCGVATGATLADAYRKALACDPVSAFGGIIAANRPLDGETAEEIARIFTEVIIAPEADEDARRIIGAKKNLRLLITHGLPDPATAGLFYKSVAGGLLVQSRDNGRVDTLDLKVVTKRAPTAQEMEDLKFAFRVCKHVKSNAIIYVKNGATVGIGAGQMSRVDSARIAARKAQDAAEAAGEKTPATIGSVVASDAFFPFADGLLSAAEAGATAVIQPGGSVRDDEVIAAADEKGLAMVMTGMRHFRH.

An MGS-like domain is found at Ala11–Val158.

Belongs to the PurH family.

It carries out the reaction (6R)-10-formyltetrahydrofolate + 5-amino-1-(5-phospho-beta-D-ribosyl)imidazole-4-carboxamide = 5-formamido-1-(5-phospho-D-ribosyl)imidazole-4-carboxamide + (6S)-5,6,7,8-tetrahydrofolate. The enzyme catalyses IMP + H2O = 5-formamido-1-(5-phospho-D-ribosyl)imidazole-4-carboxamide. Its pathway is purine metabolism; IMP biosynthesis via de novo pathway; 5-formamido-1-(5-phospho-D-ribosyl)imidazole-4-carboxamide from 5-amino-1-(5-phospho-D-ribosyl)imidazole-4-carboxamide (10-formyl THF route): step 1/1. It participates in purine metabolism; IMP biosynthesis via de novo pathway; IMP from 5-formamido-1-(5-phospho-D-ribosyl)imidazole-4-carboxamide: step 1/1. The sequence is that of Bifunctional purine biosynthesis protein PurH from Parvibaculum lavamentivorans (strain DS-1 / DSM 13023 / NCIMB 13966).